Here is a 217-residue protein sequence, read N- to C-terminus: Zinc finger CCHC-type and RNA-binding motif-containing protein 1 (217 aa).

Residues 10–88 (STVYVSNLPF…RVIKASIAID (79 aa)) form the RRM domain. Residues 105 to 122 (SKCYECGESGHLSYACPK) form a CCHC-type zinc finger. A disordered region spans residues 120 to 217 (CPKNMLGERE…YFSDEEELSD (98 aa)). Residues 145 to 163 (PEEEIEEVEESEDEGEDPA) show a composition bias toward acidic residues. Phosphoserine is present on residues serine 155, serine 210, and serine 216.

Component of the U11/U12 snRNPs that are part of the U12-type spliceosome.

Its subcellular location is the nucleus. The protein resides in the nucleoplasm. The polypeptide is Zinc finger CCHC-type and RNA-binding motif-containing protein 1 (ZCRB1) (Homo sapiens (Human)).